Here is a 147-residue protein sequence, read N- to C-terminus: 3-dehydroquinate dehydratase (147 aa).

The Proton acceptor role is filled by Y23. Residues N75, H81, and D88 each coordinate substrate. H101 acts as the Proton donor in catalysis. Residues 102–103 (LS) and R112 contribute to the substrate site.

It belongs to the type-II 3-dehydroquinase family. In terms of assembly, homododecamer.

The enzyme catalyses 3-dehydroquinate = 3-dehydroshikimate + H2O. The protein operates within metabolic intermediate biosynthesis; chorismate biosynthesis; chorismate from D-erythrose 4-phosphate and phosphoenolpyruvate: step 3/7. Catalyzes a trans-dehydration via an enolate intermediate. This Stutzerimonas stutzeri (strain A1501) (Pseudomonas stutzeri) protein is 3-dehydroquinate dehydratase.